Reading from the N-terminus, the 214-residue chain is tRNA (guanine-N(7)-)-methyltransferase (214 aa).

4 residues coordinate S-adenosyl-L-methionine: Glu43, Glu68, Asp95, and Asp117. Asp117 is a catalytic residue. Residues Lys121, Asp153, and 190 to 193 (TEYE) contribute to the substrate site.

This sequence belongs to the class I-like SAM-binding methyltransferase superfamily. TrmB family.

It carries out the reaction guanosine(46) in tRNA + S-adenosyl-L-methionine = N(7)-methylguanosine(46) in tRNA + S-adenosyl-L-homocysteine. The protein operates within tRNA modification; N(7)-methylguanine-tRNA biosynthesis. Catalyzes the formation of N(7)-methylguanine at position 46 (m7G46) in tRNA. This is tRNA (guanine-N(7)-)-methyltransferase from Staphylococcus aureus (strain JH1).